Here is a 1165-residue protein sequence, read N- to C-terminus: DNA-directed RNA polymerase subunit beta (1165 aa).

The protein belongs to the RNA polymerase beta chain family. In terms of assembly, the RNAP catalytic core consists of 2 alpha, 1 beta, 1 beta' and 1 omega subunit. When a sigma factor is associated with the core the holoenzyme is formed, which can initiate transcription.

The enzyme catalyses RNA(n) + a ribonucleoside 5'-triphosphate = RNA(n+1) + diphosphate. In terms of biological role, DNA-dependent RNA polymerase catalyzes the transcription of DNA into RNA using the four ribonucleoside triphosphates as substrates. This chain is DNA-directed RNA polymerase subunit beta, found in Leifsonia xyli subsp. xyli (strain CTCB07).